Reading from the N-terminus, the 449-residue chain is Glucose-6-phosphate isomerase (449 aa).

Residue Glu291 is the Proton donor of the active site. Active-site residues include His312 and Lys426.

The protein belongs to the GPI family.

It localises to the cytoplasm. It catalyses the reaction alpha-D-glucose 6-phosphate = beta-D-fructose 6-phosphate. The protein operates within carbohydrate biosynthesis; gluconeogenesis. It participates in carbohydrate degradation; glycolysis; D-glyceraldehyde 3-phosphate and glycerone phosphate from D-glucose: step 2/4. Functionally, catalyzes the reversible isomerization of glucose-6-phosphate to fructose-6-phosphate. This Pediococcus pentosaceus (strain ATCC 25745 / CCUG 21536 / LMG 10740 / 183-1w) protein is Glucose-6-phosphate isomerase.